Here is a 186-residue protein sequence, read N- to C-terminus: MLDQTNYTPRLKAAYANSVRAAMKEEFGYKNDMQIPRLDKIVLNMGVGEAVKDTKKVKTAAEELSMIAGQKAVVTHAKKSIAGFRVREQMPLGCKVTLRGDRMYEFLDRLITIALPRVRDFRGVKGNSFDGRGNYAMGLKEQFVFPEINFDKVDEVLGMDIIICTTAKTDAEAKALLKQFNMPFIS.

It belongs to the universal ribosomal protein uL5 family. Part of the 50S ribosomal subunit; part of the 5S rRNA/L5/L18/L25 subcomplex. Contacts the 5S rRNA and the P site tRNA. Forms a bridge to the 30S subunit in the 70S ribosome.

In terms of biological role, this is one of the proteins that bind and probably mediate the attachment of the 5S RNA into the large ribosomal subunit, where it forms part of the central protuberance. In the 70S ribosome it contacts protein S13 of the 30S subunit (bridge B1b), connecting the 2 subunits; this bridge is implicated in subunit movement. Contacts the P site tRNA; the 5S rRNA and some of its associated proteins might help stabilize positioning of ribosome-bound tRNAs. The chain is Large ribosomal subunit protein uL5 from Cereibacter sphaeroides (strain ATCC 17023 / DSM 158 / JCM 6121 / CCUG 31486 / LMG 2827 / NBRC 12203 / NCIMB 8253 / ATH 2.4.1.) (Rhodobacter sphaeroides).